A 416-amino-acid polypeptide reads, in one-letter code: Adenylosuccinate synthetase (416 aa).

Residues 13 to 19 (GDEGKGK) and 41 to 43 (GHT) each bind GTP. The Proton acceptor role is filled by aspartate 14. Aspartate 14 and glycine 41 together coordinate Mg(2+). Residues 14-17 (DEGK), 39-42 (NAGH), threonine 126, arginine 140, glutamine 220, threonine 235, and arginine 299 contribute to the IMP site. Histidine 42 functions as the Proton donor in the catalytic mechanism. 295–301 (VSTGRKR) contacts substrate. GTP is bound by residues arginine 301, 327 to 329 (KLD), and 405 to 407 (STS).

It belongs to the adenylosuccinate synthetase family. Homodimer. The cofactor is Mg(2+).

Its subcellular location is the cytoplasm. It carries out the reaction IMP + L-aspartate + GTP = N(6)-(1,2-dicarboxyethyl)-AMP + GDP + phosphate + 2 H(+). The protein operates within purine metabolism; AMP biosynthesis via de novo pathway; AMP from IMP: step 1/2. Plays an important role in the de novo pathway of purine nucleotide biosynthesis. Catalyzes the first committed step in the biosynthesis of AMP from IMP. This is Adenylosuccinate synthetase from Campylobacter jejuni subsp. jejuni serotype O:23/36 (strain 81-176).